Here is a 323-residue protein sequence, read N- to C-terminus: Probable cell division protein WhiA (323 aa).

Positions 279-313 form a DNA-binding region, H-T-H motif; that stretch reads TLKELGEMVSGGKISKSGINHRLRKLDEIAERLRA.

This sequence belongs to the WhiA family.

In terms of biological role, involved in cell division and chromosome segregation. This chain is Probable cell division protein WhiA, found in Anoxybacillus flavithermus (strain DSM 21510 / WK1).